We begin with the raw amino-acid sequence, 443 residues long: UDP-N-acetylmuramate--L-alanine ligase (443 aa).

110 to 116 (GAHGKTS) is a binding site for ATP.

The protein belongs to the MurCDEF family.

Its subcellular location is the cytoplasm. It catalyses the reaction UDP-N-acetyl-alpha-D-muramate + L-alanine + ATP = UDP-N-acetyl-alpha-D-muramoyl-L-alanine + ADP + phosphate + H(+). Its pathway is cell wall biogenesis; peptidoglycan biosynthesis. Functionally, cell wall formation. In Lactococcus lactis subsp. cremoris (strain SK11), this protein is UDP-N-acetylmuramate--L-alanine ligase.